An 815-amino-acid polypeptide reads, in one-letter code: Lon protease 1 (815 aa).

The 194-residue stretch at 12-205 (VFVLALRDVV…HILKTIETEI (194 aa)) folds into the Lon N-terminal domain. ATP is bound at residue 358 to 365 (GPPGVGKT). The region spanning 594–775 (TNQIGQVAGL…DEVFKIALES (182 aa)) is the Lon proteolytic domain. Active-site residues include S681 and K724.

Belongs to the peptidase S16 family. As to quaternary structure, homohexamer. Organized in a ring with a central cavity.

The protein localises to the cytoplasm. It carries out the reaction Hydrolysis of proteins in presence of ATP.. ATP-dependent serine protease that mediates the selective degradation of mutant and abnormal proteins as well as certain short-lived regulatory proteins. Required for cellular homeostasis and for survival from DNA damage and developmental changes induced by stress. Degrades polypeptides processively to yield small peptide fragments that are 5 to 10 amino acids long. Binds to DNA in a double-stranded, site-specific manner. The polypeptide is Lon protease 1 (Hydrogenovibrio crunogenus (strain DSM 25203 / XCL-2) (Thiomicrospira crunogena)).